The primary structure comprises 214 residues: MVKSTPMLYAADLACLKGDRLLFRGLSLHVAPGAMLRIAGPNGFGKTSLLRILCGLAHPEAGEIRWNGRPIAGDRESFHRTLLYLGHAPALNDLLTPLENLRFACAAAGDDVDEDACVDALVRIGLADQLDLPARVLSQGQRRRVGLARLFLGIRRSLWVLDEPFTALDAAAVADLATTLSDHCAAGGVVILTTHQDAPFAVPPTVLDLSEVAA.

One can recognise an ABC transporter domain in the interval 8 to 212; sequence LYAADLACLK…PPTVLDLSEV (205 aa). 40–47 provides a ligand contact to ATP; the sequence is GPNGFGKT.

Belongs to the ABC transporter superfamily. CcmA exporter (TC 3.A.1.107) family. As to quaternary structure, the complex is composed of two ATP-binding proteins (CcmA) and two transmembrane proteins (CcmB).

It is found in the cell inner membrane. The catalysed reaction is heme b(in) + ATP + H2O = heme b(out) + ADP + phosphate + H(+). Part of the ABC transporter complex CcmAB involved in the biogenesis of c-type cytochromes; once thought to export heme, this seems not to be the case, but its exact role is uncertain. Responsible for energy coupling to the transport system. This Aromatoleum aromaticum (strain DSM 19018 / LMG 30748 / EbN1) (Azoarcus sp. (strain EbN1)) protein is Cytochrome c biogenesis ATP-binding export protein CcmA.